A 402-amino-acid polypeptide reads, in one-letter code: mRNA-capping enzyme subunit alpha (402 aa).

K66 functions as the N6-GMP-lysine intermediate in the catalytic mechanism.

It belongs to the eukaryotic GTase family. In terms of assembly, heterodimer. The mRNA-capping enzyme is composed of two separate chains alpha and beta, respectively a mRNA guanylyltransferase and an mRNA 5'-triphosphate monophosphatase.

The protein localises to the nucleus. The catalysed reaction is a 5'-end diphospho-ribonucleoside in mRNA + GTP + H(+) = a 5'-end (5'-triphosphoguanosine)-ribonucleoside in mRNA + diphosphate. Second step of mRNA capping. Transfer of the GMP moiety of GTP to the 5'-end of RNA via an enzyme-GMP covalent reaction intermediate. The polypeptide is mRNA-capping enzyme subunit alpha (rnp-2) (Neurospora crassa (strain ATCC 24698 / 74-OR23-1A / CBS 708.71 / DSM 1257 / FGSC 987)).